The sequence spans 513 residues: ATP synthase subunit alpha 2 (513 aa).

169–176 (GDRQTGKT) lines the ATP pocket.

The protein belongs to the ATPase alpha/beta chains family. F-type ATPases have 2 components, CF(1) - the catalytic core - and CF(0) - the membrane proton channel. CF(1) has five subunits: alpha(3), beta(3), gamma(1), delta(1), epsilon(1). CF(0) has three main subunits: a(1), b(2) and c(9-12). The alpha and beta chains form an alternating ring which encloses part of the gamma chain. CF(1) is attached to CF(0) by a central stalk formed by the gamma and epsilon chains, while a peripheral stalk is formed by the delta and b chains.

It localises to the cell inner membrane. The catalysed reaction is ATP + H2O + 4 H(+)(in) = ADP + phosphate + 5 H(+)(out). In terms of biological role, produces ATP from ADP in the presence of a proton gradient across the membrane. The alpha chain is a regulatory subunit. The chain is ATP synthase subunit alpha 2 from Shewanella frigidimarina (strain NCIMB 400).